The sequence spans 542 residues: Protein lin-9 homolog (542 aa).

Ala2 is subject to N-acetylalanine. The sufficient for interaction with RB1 stretch occupies residues Ala2–Met296. Residue Lys21 forms a Glycyl lysine isopeptide (Lys-Gly) (interchain with G-Cter in SUMO2) linkage. 2 positions are modified to phosphoserine: Ser65 and Ser95. Phosphothreonine occurs at positions 96 and 304. Phosphoserine is present on residues Ser309 and Ser321. A coiled-coil region spans residues Met354–Cys413.

This sequence belongs to the lin-9 family. As to quaternary structure, component of the DREAM complex (also named LINC complex) at least composed of E2F4, E2F5, LIN9, LIN37, LIN52, LIN54, MYBL1, MYBL2, RBL1, RBL2, RBBP4, TFDP1 and TFDP2. The complex exists in quiescent cells where it represses cell cycle-dependent genes. It dissociates in S phase when LIN9, LIN37, LIN52 and LIN54 form a subcomplex that binds to MYBL2. Interacts with RB1. In terms of tissue distribution, expressed in thymus and testis.

It localises to the nucleus. The protein localises to the nucleoplasm. Functionally, acts as a tumor suppressor. Inhibits DNA synthesis. Its ability to inhibit oncogenic transformation is mediated through its association with RB1. Plays a role in the expression of genes required for the G1/S transition. This chain is Protein lin-9 homolog (LIN9), found in Homo sapiens (Human).